Consider the following 257-residue polypeptide: Putative B3 domain-containing protein At2g27410 (257 aa).

Positions 5–50 (ARTTKINHFRGTSTTQNPNRGLEPSPSSYVTRRSKEKRPINVEKRS) are disordered. Polar residues predominate over residues 8-35 (TKINHFRGTSTTQNPNRGLEPSPSSYVT). A DNA-binding region (TF-B3) is located at residues 115–209 (TPDFLTEDET…KLCFALTPKN (95 aa)). The disordered stretch occupies residues 212 to 257 (RGNSLPGGDGASTSGESGQVPLPIPPARYSSNSGQGCSGESSSSSS). A compositionally biased stretch (low complexity) spans 241–257 (SSNSGQGCSGESSSSSS).

It is found in the nucleus. This is Putative B3 domain-containing protein At2g27410 from Arabidopsis thaliana (Mouse-ear cress).